The primary structure comprises 289 residues: 4-diphosphocytidyl-2-C-methyl-D-erythritol kinase (289 aa).

Lys-11 is a catalytic residue. ATP is bound at residue 95–105 (PMGGGIGGGSS). Asp-137 is an active-site residue.

It belongs to the GHMP kinase family. IspE subfamily.

It carries out the reaction 4-CDP-2-C-methyl-D-erythritol + ATP = 4-CDP-2-C-methyl-D-erythritol 2-phosphate + ADP + H(+). Its pathway is isoprenoid biosynthesis; isopentenyl diphosphate biosynthesis via DXP pathway; isopentenyl diphosphate from 1-deoxy-D-xylulose 5-phosphate: step 3/6. Functionally, catalyzes the phosphorylation of the position 2 hydroxy group of 4-diphosphocytidyl-2C-methyl-D-erythritol. This is 4-diphosphocytidyl-2-C-methyl-D-erythritol kinase from Aeromonas hydrophila subsp. hydrophila (strain ATCC 7966 / DSM 30187 / BCRC 13018 / CCUG 14551 / JCM 1027 / KCTC 2358 / NCIMB 9240 / NCTC 8049).